Consider the following 395-residue polypeptide: Beta-1,4-galactosyltransferase 3 (395 aa).

Topologically, residues 1 to 10 (MLRRLLERPC) are cytoplasmic. The helical; Signal-anchor for type II membrane protein transmembrane segment at 11-31 (TLALLVGSQLAVMMYLSLGGF) threads the bilayer. Topologically, residues 32 to 395 (RSLSALFGRD…ANHTAPHGSH (364 aa)) are lumenal. N-linked (GlcNAc...) asparagine glycosylation occurs at Asn-57. An intrachain disulfide couples Cys-79 to Cys-121. UDP-alpha-D-galactose is bound at residue 132–136 (PHRAR). Residue Asn-168 is glycosylated (N-linked (GlcNAc...) asparagine). UDP-alpha-D-galactose-binding positions include 171–173 (FNR), 198–199 (VD), Tyr-228, and Trp-260. Cys-192 and Cys-211 are joined by a disulfide. Asp-199 contacts Mn(2+). Position 262–265 (262–265 (GEDD)) interacts with N-acetyl-D-glucosamine. His-293 contacts Mn(2+). 293–295 (HRG) is a UDP-alpha-D-galactose binding site. Arg-305 lines the N-acetyl-D-glucosamine pocket. N-linked (GlcNAc...) asparagine glycans are attached at residues Asn-339 and Asn-387. The tract at residues 341 to 395 (TADIGTDPRGPRAPSGPRYPPGSSQAFRQEMLQRRPPARPGPLPTANHTAPHGSH) is disordered.

This sequence belongs to the glycosyltransferase 7 family. Requires Mn(2+) as cofactor.

It localises to the golgi apparatus. Its subcellular location is the golgi stack membrane. It carries out the reaction an N-acetyl-beta-D-glucosaminyl derivative + UDP-alpha-D-galactose = a beta-D-galactosyl-(1-&gt;4)-N-acetyl-beta-D-glucosaminyl derivative + UDP + H(+). The catalysed reaction is N-acetyl-D-glucosamine + UDP-alpha-D-galactose = beta-D-galactosyl-(1-&gt;4)-N-acetyl-D-glucosamine + UDP + H(+). It catalyses the reaction a beta-D-GlcNAc-(1-&gt;3)-beta-D-Gal-(1-&gt;4)-beta-D-Glc-(1&lt;-&gt;1)-Cer(d18:1(4E)) + UDP-alpha-D-galactose = a neolactoside nLc4Cer(d18:1(4E)) + UDP + H(+). The enzyme catalyses a beta-D-glucosylceramide + UDP-alpha-D-galactose = a beta-D-galactosyl-(1-&gt;4)-beta-D-glucosyl-(1&lt;-&gt;1)-ceramide + UDP + H(+). It carries out the reaction a neolactoside IV(3)-beta-GlcNAc-nLc4Cer + UDP-alpha-D-galactose = a neolactoside nLc6Cer + UDP + H(+). The protein operates within protein modification; protein glycosylation. Responsible for the synthesis of complex-type N-linked oligosaccharides in many glycoproteins as well as the carbohydrate moieties of glycolipids. The polypeptide is Beta-1,4-galactosyltransferase 3 (Rattus norvegicus (Rat)).